The following is a 114-amino-acid chain: MYTKIALLGLVGSAAAFNAPMMTVRRDAIATGAAAAVVAPMLRPAGAAMKKDSKAPCVEVFDERDGCKAAGTQKASGDDGFCVKVSMKAIGFNAAEAASVTKNYGIKRFGAKSV.

(2R,3E)-phycoerythrobilin-binding residues include aspartate 52, serine 53, glutamate 63, arginine 64, cysteine 67, threonine 72, lysine 74, alanine 75, and lysine 84.

The protein belongs to the phycoerythrin family. Heterotetramer of 2 different alpha chains and 2 identical beta chains which form 2 alpha-beta heterodimers within the heterotetramer. The two alpha-beta heterodimers are rotated to an open configuration in contrast to the closed configuration found in other cryptophyte species due to the insertion of a single amino acid, Asp-65, in a conserved region of the alpha chain. In the open form, the central chromophores are not in physical contact but are separated by a water-filled channel. Contains three phycoerythrobilin chromophores with binding mediated by both the alpha and beta subunits.

The protein localises to the plastid. It is found in the chloroplast thylakoid membrane. In terms of biological role, light-harvesting photosynthetic tetrapyrrole chromophore-protein from the phycobiliprotein complex. The protein is Phycoerythrin alpha-1 subunit of Hemiselmis andersenii (Cryptophyte alga).